A 185-amino-acid polypeptide reads, in one-letter code: Elongation factor P (185 aa).

It belongs to the elongation factor P family.

It is found in the cytoplasm. It functions in the pathway protein biosynthesis; polypeptide chain elongation. Involved in peptide bond synthesis. Stimulates efficient translation and peptide-bond synthesis on native or reconstituted 70S ribosomes in vitro. Probably functions indirectly by altering the affinity of the ribosome for aminoacyl-tRNA, thus increasing their reactivity as acceptors for peptidyl transferase. The chain is Elongation factor P from Salinispora tropica (strain ATCC BAA-916 / DSM 44818 / JCM 13857 / NBRC 105044 / CNB-440).